The chain runs to 105 residues: Late embryogenesis abundant protein Lea5-D (105 aa).

Residues 48 to 67 (KVERRDAMKESSSSETRAYS) form a disordered region. Low complexity predominate over residues 57–67 (ESSSSETRAYS).

Belongs to the LEA type 3 family.

In Gossypium hirsutum (Upland cotton), this protein is Late embryogenesis abundant protein Lea5-D (LEA5-D).